The primary structure comprises 606 residues: Atypical protein kinase C (606 aa).

One can recognise a PB1 domain in the interval 30 to 113 (SITVKTAYNG…SQLVIHVFPN (84 aa)). The Phorbol-ester/DAG-type zinc-finger motif lies at 145–195 (GHIFQAKRFNRRAFCAYCQDRIWGLGRQGFKCIQCKLLVHKKCHKLVQKHC). The region spanning 264-532 (FELIRVIGRG…FMDIVSHPFF (269 aa)) is the Protein kinase domain. Residues 270-278 (IGRGSYAKV) and Lys-293 contribute to the ATP site. Catalysis depends on Asp-388, which acts as the Proton acceptor. In terms of domain architecture, AGC-kinase C-terminal spans 533 to 604 (KNMDWELLER…VNPLLMSLED (72 aa)).

The protein belongs to the protein kinase superfamily. AGC Ser/Thr protein kinase family. PKC subfamily. Interacts with baz; the interaction is required for apical localization of aPKC in neuroblasts and epithelial cells. Interacts with Dap160; the interaction promotes aPKC apical localization and kinase activity. Interacts with and phosphorylates l(2)gl and yrt. Interacts with crb and ref(2)P. Forms a complex with baz, fz and Patj. Expressed in the testis. In spermatid cysts, localizes near the tips of spermatid flagellar axonemes (at protein level). Detectable in freshly laid eggs before onset of zygotic transcription so is deposited in the egg during oogenesis. At the cellular blastoderm stage, present in all cells except the pole cells. During gastrulation, strongly expressed in tissues undergoing morphogenetic movements such as invaginating mesoderm, proctodeum and cephalic furrow. Strongly expressed in neuroblasts.

The protein localises to the cytoplasm. The protein resides in the cell cortex. Its subcellular location is the apicolateral cell membrane. The catalysed reaction is L-seryl-[protein] + ATP = O-phospho-L-seryl-[protein] + ADP + H(+). The enzyme catalyses L-threonyl-[protein] + ATP = O-phospho-L-threonyl-[protein] + ADP + H(+). Its function is as follows. Serine/threonine protein kinase which is required for apico-basal cell polarity in the germ line as well as in epithelial and neural precursor cells, for epithelial planar cell polarity and for cell proliferation. During oocyte development, required for the posterior translocation of oocyte specification factors and for the posterior establishment of the microtubule organizing center within the presumptive oocyte. Phosphorylates l(2)gl which restricts l(2)gl activity to the oocyte posterior and regulates posterior enrichment of par-1, leading to establishment of correct oocyte polarity. Essential for apical localization of l(2)gl and par-6 in neuroblasts and for exclusion of mira from the apical cortex. Phosphorylates baz which is required for targeting of baz to the postsynaptic region where it is involved in actin organization, and for apical exclusion of baz which is necessary for establishment of the apical/lateral border in epithelial cells. Phosphorylates yrt which prevents its premature apical localization and is necessary for correct epithelial cell polarization. Required for the establishment of mitotic spindle orientation during symmetric division of epithelial cells and for apical exclusion of raps/Pins. Involved in symmetric adherens junction positioning during embryogenesis. Required for polarization of the spermatid cyst which is necessary for sperm differentiation. Required for stimulation of the Toll signaling pathway which activates Dif and dl and plays a role in innate immunity. Plays a role in memory enhancement. This Drosophila melanogaster (Fruit fly) protein is Atypical protein kinase C.